The primary structure comprises 717 residues: Serologically defined colon cancer antigen 8 homolog (717 aa).

2 positions are modified to phosphoserine: S4 and S28. The disordered stretch occupies residues 84–115; that stretch reads QTNKENETSPPRRRKLSPSRPSECDDGSMPTM. Coiled coils occupy residues 129 to 168, 221 to 278, 352 to 590, and 622 to 712; these read IHHL…KSQR, DANK…LAAS, EEAN…SEQY, and RSQI…LPSM. Residues 216–717 form a sufficient for homodimerization region; the sequence is TASTGDANKW…QLPSMPQSDC (502 aa).

In terms of assembly, homodimer. Interacts with OFD1; the interaction is direct. Interacts with FAM161A. Interacts with RABEP2, ERC1 and CEP131. In terms of tissue distribution, expressed in liver, kidney, spleen, brain, heart and muscle. Expressed in photoreceptor cells of the retina.

The protein resides in the cytoplasm. It is found in the cytoskeleton. The protein localises to the microtubule organizing center. It localises to the centrosome. Its subcellular location is the centriole. The protein resides in the cilium basal body. It is found in the cell junction. In terms of biological role, plays a role in the establishment of cell polarity and epithelial lumen formation. Also plays an essential role in ciliogenesis and subsequent Hedgehog signaling pathway that requires the presence of intact primary cilia for pathway activation. Mechanistically, interacts with and mediates RABEP2 centrosomal localization which is critical for ciliogenesis. The polypeptide is Serologically defined colon cancer antigen 8 homolog (Sdccag8) (Mus musculus (Mouse)).